We begin with the raw amino-acid sequence, 175 residues long: tRNA (cytidine(56)-2'-O)-methyltransferase (175 aa).

An S-adenosyl-L-methionine-binding site is contributed by Leu-83.

This sequence belongs to the aTrm56 family. Homodimer.

The protein resides in the cytoplasm. It catalyses the reaction cytidine(56) in tRNA + S-adenosyl-L-methionine = 2'-O-methylcytidine(56) in tRNA + S-adenosyl-L-homocysteine + H(+). Functionally, specifically catalyzes the AdoMet-dependent 2'-O-ribose methylation of cytidine at position 56 in tRNAs. In Methanosphaera stadtmanae (strain ATCC 43021 / DSM 3091 / JCM 11832 / MCB-3), this protein is tRNA (cytidine(56)-2'-O)-methyltransferase.